The primary structure comprises 215 residues: Protein GET1 (215 aa).

Residues 1–4 (MINL) lie on the Lumenal side of the membrane. A helical transmembrane segment spans residues 5–24 (ALVIFLCTLLNQIVSWVGKS). Residues 25 to 108 (VLQEIAFTAY…SFSKKFSTLL (84 aa)) lie on the Cytoplasmic side of the membrane. A coiled-coil region spans residues 73-94 (AKLRRKLDKGLADLEKTNNTLS). Residues 109–129 (WLMTTGAQFLLSWWFRKQPIF) traverse the membrane as a helical segment. Residues 130–153 (WLPEGWVPYPVAWLLSFPSAPIGS) lie on the Lumenal side of the membrane. Residues 154–170 (VSSGAWGAICRRVLSTL) traverse the membrane as a helical segment. The Cytoplasmic segment spans residues 171 to 215 (QEIIQSVLAPSPAATGPVPTGPSSAKNDQPEAKIEALALEHEKLD). The disordered stretch occupies residues 181 to 202 (SPAATGPVPTGPSSAKNDQPEA).

Belongs to the WRB/GET1 family. Interacts with GET3.

It is found in the endoplasmic reticulum membrane. Its function is as follows. Required for the post-translational delivery of tail-anchored (TA) proteins to the endoplasmic reticulum. Acts as a membrane receptor for soluble GET3, which recognizes and selectively binds the transmembrane domain of TA proteins in the cytosol. This chain is Protein GET1, found in Cryptococcus neoformans var. neoformans serotype D (strain B-3501A) (Filobasidiella neoformans).